Reading from the N-terminus, the 714-residue chain is FERM domain-containing protein 7 (714 aa).

Positions 2–282 (LHLKVQFLDD…EYHAFFRLSE (281 aa)) constitute an FERM domain. The stretch at 537–558 (NIRMKSFQQDLQVLQEAIARTS) forms a coiled coil.

In terms of tissue distribution, expressed in liver, kidney, pancreas and at low levels in brain and heart. Expressed in embryonic brain and developing neural retina.

Its subcellular location is the cell projection. The protein localises to the neuron projection. It is found in the growth cone. Functionally, plays a role in neurite development, may be through the activation of the GTPase RAC1. Plays a role in the control of eye movement and gaze stability. The chain is FERM domain-containing protein 7 (FRMD7) from Homo sapiens (Human).